The primary structure comprises 367 residues: Zinc metalloproteinase nas-22 (367 aa).

A signal peptide spans 1–16 (MKSFFILLSILQECYG). The Peptidase M12A domain occupies 41–237 (VLIRGSDEER…LMINKYYECS (197 aa)). 2 N-linked (GlcNAc...) asparagine glycosylation sites follow: asparagine 56 and asparagine 85. 4 cysteine pairs are disulfide-bonded: cysteine 88-cysteine 236, cysteine 111-cysteine 130, cysteine 238-cysteine 258, and cysteine 260-cysteine 269. Zn(2+) is bound at residue histidine 138. The active site involves glutamate 139. Zn(2+) contacts are provided by histidine 142 and histidine 148. N-linked (GlcNAc...) asparagine glycosylation is found at asparagine 169, asparagine 241, and asparagine 254. The EGF-like domain occupies 232–270 (KYYECSCANNLSCKNHGYPNPSNCSQCNCPYGFGGADCS). 2 N-linked (GlcNAc...) asparagine glycosylation sites follow: asparagine 287 and asparagine 322.

Zn(2+) serves as cofactor. In terms of tissue distribution, expressed in uterine seam (utse) cell.

Its subcellular location is the secreted. In terms of biological role, metalloprotease. This Caenorhabditis elegans protein is Zinc metalloproteinase nas-22 (nas-22).